Reading from the N-terminus, the 498-residue chain is Glycerol kinase (498 aa).

Thr12 is an ADP binding site. Residues Thr12, Thr13, and Ser14 each contribute to the ATP site. Thr12 is a binding site for sn-glycerol 3-phosphate. Arg16 serves as a coordination point for ADP. The sn-glycerol 3-phosphate site is built by Arg82, Glu83, Tyr134, and Asp244. Glycerol-binding residues include Arg82, Glu83, Tyr134, Asp244, and Gln245. ADP is bound by residues Thr266 and Gly310. ATP is bound by residues Thr266, Gly310, Gln314, and Gly411. Gly411 and Asn415 together coordinate ADP.

The protein belongs to the FGGY kinase family.

It catalyses the reaction glycerol + ATP = sn-glycerol 3-phosphate + ADP + H(+). Its pathway is polyol metabolism; glycerol degradation via glycerol kinase pathway; sn-glycerol 3-phosphate from glycerol: step 1/1. With respect to regulation, inhibited by fructose 1,6-bisphosphate (FBP). In terms of biological role, key enzyme in the regulation of glycerol uptake and metabolism. Catalyzes the phosphorylation of glycerol to yield sn-glycerol 3-phosphate. This Roseiflexus sp. (strain RS-1) protein is Glycerol kinase.